The chain runs to 266 residues: Glucosamine-6-phosphate deaminase (266 aa).

The Proton acceptor; for enolization step role is filled by Asp-72. The active-site For ring-opening step is the Asp-141. His-143 functions as the Proton acceptor; for ring-opening step in the catalytic mechanism. Glu-148 (for ring-opening step) is an active-site residue.

The protein belongs to the glucosamine/galactosamine-6-phosphate isomerase family. NagB subfamily. In terms of assembly, homohexamer.

It catalyses the reaction alpha-D-glucosamine 6-phosphate + H2O = beta-D-fructose 6-phosphate + NH4(+). Its pathway is amino-sugar metabolism; N-acetylneuraminate degradation; D-fructose 6-phosphate from N-acetylneuraminate: step 5/5. Allosterically activated by N-acetylglucosamine 6-phosphate (GlcNAc6P). Its function is as follows. Catalyzes the reversible isomerization-deamination of glucosamine 6-phosphate (GlcN6P) to form fructose 6-phosphate (Fru6P) and ammonium ion. This Yersinia enterocolitica serotype O:8 / biotype 1B (strain NCTC 13174 / 8081) protein is Glucosamine-6-phosphate deaminase.